We begin with the raw amino-acid sequence, 368 residues long: RNA polymerase sigma factor SigA (368 aa).

Basic and acidic residues predominate over residues 71 to 83 (NEKDSSDTDDKIN). The interval 71-90 (NEKDSSDTDDKINPNDLSAP) is disordered. Residues 135–205 (LAEANLRLVV…TRAIADQART (71 aa)) form a sigma-70 factor domain-2 region. The short motif at 159 to 162 (DLIQ) is the Interaction with polymerase core subunit RpoC element. A sigma-70 factor domain-3 region spans residues 214 to 290 (ETINKLIRVQ…DQEAQSPSDH (77 aa)). The segment at 303–356 (VLDTLTDREENVLRLRFGLDDGRTRTLEEVGKVFGVTRERIRQIEAKALRKLRH) is sigma-70 factor domain-4. Residues 329–348 (LEEVGKVFGVTRERIRQIEA) constitute a DNA-binding region (H-T-H motif).

The protein belongs to the sigma-70 factor family. RpoD/SigA subfamily. Interacts transiently with the RNA polymerase catalytic core.

It is found in the cytoplasm. Sigma factors are initiation factors that promote the attachment of RNA polymerase to specific initiation sites and are then released. This sigma factor is the primary sigma factor during exponential growth. The polypeptide is RNA polymerase sigma factor SigA (Staphylococcus epidermidis (strain ATCC 35984 / DSM 28319 / BCRC 17069 / CCUG 31568 / BM 3577 / RP62A)).